A 607-amino-acid chain; its full sequence is Guanine nucleotide-binding protein-like 1 (607 aa).

The span at 1–14 shows a compositional bias: basic residues; that stretch reads MPRKKPFSVKQKKK. The segment at 1-81 is disordered; sequence MPRKKPFSVK…GPRGYDPNRY (81 aa). Basic and acidic residues predominate over residues 15–26; sequence QLQDKRERKRGL. Phosphoserine is present on residues Ser-32, Ser-33, and Ser-34. A phosphothreonine mark is found at Thr-48 and Thr-50. A phosphoserine mark is found at Ser-51 and Ser-68. One can recognise a CP-type G domain in the interval 178–418; that stretch reads WRQLWRVLEM…LCDCPGLIFP (241 aa). 225 to 228 contributes to the GTP binding site; the sequence is NKVD. Ser-324 bears the Phosphoserine mark. Residues 367-374 and 411-415 contribute to the GTP site; these read GFPNVGKS and DCPGL. The interval 547–607 is disordered; sequence GPAGDEEEEE…PYALLGEDEC (61 aa). Over residues 550 to 584 the composition is skewed to acidic residues; the sequence is GDEEEEEEEELSSSCEEEGEEDRDADEEGEGDEET. A phosphoserine mark is found at Ser-561, Ser-562, and Ser-563.

Belongs to the TRAFAC class YlqF/YawG GTPase family.

Possible regulatory or functional link with the histocompatibility cluster. This is Guanine nucleotide-binding protein-like 1 (GNL1) from Pan troglodytes (Chimpanzee).